We begin with the raw amino-acid sequence, 511 residues long: Glucans biosynthesis protein G (511 aa).

The N-terminal stretch at 1-22 (MMKMRWLSAAVMLTLYTSSSWA) is a signal peptide.

This sequence belongs to the OpgD/OpgG family.

It is found in the periplasm. Its pathway is glycan metabolism; osmoregulated periplasmic glucan (OPG) biosynthesis. Involved in the biosynthesis of osmoregulated periplasmic glucans (OPGs). In Escherichia fergusonii (strain ATCC 35469 / DSM 13698 / CCUG 18766 / IAM 14443 / JCM 21226 / LMG 7866 / NBRC 102419 / NCTC 12128 / CDC 0568-73), this protein is Glucans biosynthesis protein G.